A 322-amino-acid chain; its full sequence is Labrum-interacting protein from saliva LIPS-2 (322 aa).

A signal peptide spans 1 to 20; sequence MKTSLPIVVLLTAVISGVHP. Residues Cys-27 and Cys-62 are joined by a disulfide bond. N-linked (GlcNAc...) asparagine glycosylation is found at Asn-168 and Asn-175. Residues Cys-249 and Cys-295 are joined by a disulfide bond.

As to quaternary structure, monomer in solution. Interacts (via the N-terminal domain) with cuticular protein Cp19 (via the C-terminus). Proteolytically cleaved by human mast cell tryptase and chymase. Post-translationally, glycosylated. Female salivary gland (at protein level). Female saliva (at protein level).

It localises to the secreted. In terms of biological role, salivary protein that promotes mosquito blood feeding on the vertebrate host by inducing morphological changes in the mosquito labrum. Interacts with the mosquito labrum end tip and triggers salivation and probing. Modulates enzymatic activities of human tryptase and chymase. This Aedes albopictus (Asian tiger mosquito) protein is Labrum-interacting protein from saliva LIPS-2.